A 287-amino-acid chain; its full sequence is Beta-lactamase GES-2 (287 aa).

Positions 1–18 (MRFIHALLLAGIAHSAYA) are cleaved as a signal peptide. C63 and C233 are oxidised to a cystine. The active-site Nucleophile; acyl-ester intermediate is the S64. K67, S125, and E161 together coordinate a beta-lactam.

Belongs to the class-A beta-lactamase family.

It catalyses the reaction a beta-lactam + H2O = a substituted beta-amino acid. Its activity is regulated as follows. Inhibited by the beta-lactamase-blocking agents clavulanic acid, sulbactam and tazobactam. Functionally, extended-spectrum beta-lactamase (ESBL) which confers resistance to penicillins, as well as first, third and fourth-generation cephalosporins. Has modest carbapenem-hydrolyzing activity. Has cefotaxime-hydrolyzing activity. The sequence is that of Beta-lactamase GES-2 from Pseudomonas aeruginosa.